We begin with the raw amino-acid sequence, 216 residues long: Protein Syd (216 aa).

Belongs to the Syd family.

It is found in the cell inner membrane. Its function is as follows. Interacts with the SecY protein in vivo. May bind preferentially to an uncomplexed state of SecY, thus functioning either as a chelating agent for excess SecY in the cell or as a regulatory factor that negatively controls the translocase function. This is Protein Syd from Shewanella sp. (strain W3-18-1).